The primary structure comprises 159 residues: Globin C, coelomic (159 aa).

The residue at position 2 (Gly2) is an N-acetylglycine. The region spanning 12 to 158 (DLTLAQKKIV…VQAVLLVKHG (147 aa)) is the Globin domain. Heme b is bound by residues His74 and His105.

The protein belongs to the globin family. Monomer.

The chain is Globin C, coelomic from Molpadia arenicola (Sea cucumber).